We begin with the raw amino-acid sequence, 146 residues long: Protein ADM2 (146 aa).

Residues 1 to 25 form the signal peptide; that stretch reads MAQLLMVTVTFGCISLLYLLPGTLS. The propeptide occupies 26–96; it reads GSLGKGLRPR…HPGPQRHVGS (71 aa). The interval 29–99 is disordered; it reads GKGLRPREPP…PQRHVGSRRP (71 aa). C108 and C113 are disulfide-bonded. Position 145 is a tyrosine amide (Y145).

The protein belongs to the adrenomedullin family. In terms of tissue distribution, expression was restricted to the intermediate and anterior lobes of the pituitary.

It is found in the secreted. In terms of biological role, intermedin/ADM2 is a peptide hormone that plays a role as physiological regulator of gastrointestinal and cardiovascular bioactivities mediated by the CALCRL-RAMPs receptor complexes. Activates the cAMP-dependent pathway through interaction with CALCRL-RAMP3 receptor complex. The sequence is that of Protein ADM2 from Rattus norvegicus (Rat).